Reading from the N-terminus, the 323-residue chain is MNIVILAGGRSAERQVSLVTGKACKRALEDLGHRAKLIDPEEDLPLRLWQERQAGCDFVWIALHGPGGEDGVVQGMLEWLGLPYQGSGPLASALAMDKLVSKQIFRAEGIPTPEWLVWDEAQPLSWAECVARLGSPLVVKPSNSGSTVGISLARDEVSLAQGLALASSVSSRVFLERYIPGKEITLSILSGQVLPAIEIIPAQGDFYDYEAKYAPGGSRHLIPCSLSAAGLARCEAAGLRAYRVLGCEGLARVDLRVDADENPWVLEVNTLPGMTPTSLCPEAAAALGWTFTELVERMLQDALQRAALTRSAPSGSRPSPQPA.

Positions 102-300 (KQIFRAEGIP…FTELVERMLQ (199 aa)) constitute an ATP-grasp domain. 130–185 (VARLGSPLVVKPSNSGSTVGISLARDEVSLAQGLALASSVSSRVFLERYIPGKEIT) provides a ligand contact to ATP. Mg(2+) is bound by residues Asp254, Glu267, and Asn269.

This sequence belongs to the D-alanine--D-alanine ligase family. It depends on Mg(2+) as a cofactor. The cofactor is Mn(2+).

The protein resides in the cytoplasm. The enzyme catalyses 2 D-alanine + ATP = D-alanyl-D-alanine + ADP + phosphate + H(+). Its pathway is cell wall biogenesis; peptidoglycan biosynthesis. Functionally, cell wall formation. The sequence is that of D-alanine--D-alanine ligase from Synechococcus sp. (strain JA-3-3Ab) (Cyanobacteria bacterium Yellowstone A-Prime).